The primary structure comprises 227 residues: tRNA (guanine-N(1)-)-methyltransferase (227 aa).

S-adenosyl-L-methionine is bound by residues Gly110 and 129–134; that span reads IGDYVL.

Belongs to the RNA methyltransferase TrmD family. As to quaternary structure, homodimer.

The protein localises to the cytoplasm. It carries out the reaction guanosine(37) in tRNA + S-adenosyl-L-methionine = N(1)-methylguanosine(37) in tRNA + S-adenosyl-L-homocysteine + H(+). Its function is as follows. Specifically methylates guanosine-37 in various tRNAs. The sequence is that of tRNA (guanine-N(1)-)-methyltransferase from Mycoplasmopsis synoviae (strain 53) (Mycoplasma synoviae).